The chain runs to 243 residues: 1-(5-phosphoribosyl)-5-[(5-phosphoribosylamino)methylideneamino] imidazole-4-carboxamide isomerase (243 aa).

Residue Asp10 is the Proton acceptor of the active site. Catalysis depends on Asp129, which acts as the Proton donor.

The protein belongs to the HisA/HisF family.

Its subcellular location is the cytoplasm. It carries out the reaction 1-(5-phospho-beta-D-ribosyl)-5-[(5-phospho-beta-D-ribosylamino)methylideneamino]imidazole-4-carboxamide = 5-[(5-phospho-1-deoxy-D-ribulos-1-ylimino)methylamino]-1-(5-phospho-beta-D-ribosyl)imidazole-4-carboxamide. The protein operates within amino-acid biosynthesis; L-histidine biosynthesis; L-histidine from 5-phospho-alpha-D-ribose 1-diphosphate: step 4/9. The polypeptide is 1-(5-phosphoribosyl)-5-[(5-phosphoribosylamino)methylideneamino] imidazole-4-carboxamide isomerase (Saccharopolyspora erythraea (strain ATCC 11635 / DSM 40517 / JCM 4748 / NBRC 13426 / NCIMB 8594 / NRRL 2338)).